The chain runs to 91 residues: Small integral membrane protein 12-A (91 aa).

A helical transmembrane segment spans residues 12–34 (YAPYITFPVAFVVGAVGYQLEWF).

It belongs to the SMIM12 family.

It is found in the membrane. The chain is Small integral membrane protein 12-A (smim12-a) from Xenopus laevis (African clawed frog).